We begin with the raw amino-acid sequence, 103 residues long: MVYAIVRAGGRQEKVSVGDLVTLDRVAGEAGSTVELPALLLVDGDKVTSDSKTLADVKVTAEIIEDLRGPKISIMKYKNKTGYKKRQGFRAELTTVKITGIDA.

Belongs to the bacterial ribosomal protein bL21 family. Part of the 50S ribosomal subunit. Contacts protein L20.

Functionally, this protein binds to 23S rRNA in the presence of protein L20. The sequence is that of Large ribosomal subunit protein bL21 from Kocuria rhizophila (strain ATCC 9341 / DSM 348 / NBRC 103217 / DC2201).